A 473-amino-acid polypeptide reads, in one-letter code: ATP synthase subunit beta (473 aa).

158-165 (GGAGVGKT) contributes to the ATP binding site.

This sequence belongs to the ATPase alpha/beta chains family. As to quaternary structure, F-type ATPases have 2 components, CF(1) - the catalytic core - and CF(0) - the membrane proton channel. CF(1) has five subunits: alpha(3), beta(3), gamma(1), delta(1), epsilon(1). CF(0) has three main subunits: a(1), b(2) and c(9-12). The alpha and beta chains form an alternating ring which encloses part of the gamma chain. CF(1) is attached to CF(0) by a central stalk formed by the gamma and epsilon chains, while a peripheral stalk is formed by the delta and b chains.

Its subcellular location is the cell membrane. The enzyme catalyses ATP + H2O + 4 H(+)(in) = ADP + phosphate + 5 H(+)(out). Functionally, produces ATP from ADP in the presence of a proton gradient across the membrane. The catalytic sites are hosted primarily by the beta subunits. The sequence is that of ATP synthase subunit beta from Bacillus sp. (strain PS3).